We begin with the raw amino-acid sequence, 344 residues long: Phosphoribosylformylglycinamidine cyclo-ligase (344 aa).

It belongs to the AIR synthase family.

The protein resides in the cytoplasm. The enzyme catalyses 2-formamido-N(1)-(5-O-phospho-beta-D-ribosyl)acetamidine + ATP = 5-amino-1-(5-phospho-beta-D-ribosyl)imidazole + ADP + phosphate + H(+). It functions in the pathway purine metabolism; IMP biosynthesis via de novo pathway; 5-amino-1-(5-phospho-D-ribosyl)imidazole from N(2)-formyl-N(1)-(5-phospho-D-ribosyl)glycinamide: step 2/2. The chain is Phosphoribosylformylglycinamidine cyclo-ligase from Exiguobacterium sibiricum (strain DSM 17290 / CCUG 55495 / CIP 109462 / JCM 13490 / 255-15).